A 591-amino-acid polypeptide reads, in one-letter code: V-type ATP synthase alpha chain (591 aa).

An ATP-binding site is contributed by 233-240 (GPFGAGKT).

Belongs to the ATPase alpha/beta chains family.

It catalyses the reaction ATP + H2O + 4 H(+)(in) = ADP + phosphate + 5 H(+)(out). Produces ATP from ADP in the presence of a proton gradient across the membrane. The V-type alpha chain is a catalytic subunit. This Streptococcus pneumoniae (strain ATCC 700669 / Spain 23F-1) protein is V-type ATP synthase alpha chain.